We begin with the raw amino-acid sequence, 284 residues long: uncharacterized protein (284 aa).

The region spanning 4–133 is the Photolyase/cryptochrome alpha/beta domain; sequence PLHLFWHRRD…AVHRQWDQLL (130 aa).

This is an uncharacterized protein from Synechococcus sp. (strain PCC 6716).